Here is a 185-residue protein sequence, read N- to C-terminus: Alkyl hydroperoxide reductase AhpD (185 aa).

Catalysis depends on cysteine 131, which acts as the Proton donor. A disulfide bridge connects residues cysteine 131 and cysteine 134. The Cysteine sulfenic acid (-SOH) intermediate role is filled by cysteine 134.

Belongs to the AhpD family. In terms of assembly, homotrimer.

The catalysed reaction is N(6)-[(R)-dihydrolipoyl]-L-lysyl-[lipoyl-carrier protein] + a hydroperoxide = N(6)-[(R)-lipoyl]-L-lysyl-[lipoyl-carrier protein] + an alcohol + H2O. Functionally, antioxidant protein with alkyl hydroperoxidase activity. Required for the reduction of the AhpC active site cysteine residues and for the regeneration of the AhpC enzyme activity. This chain is Alkyl hydroperoxide reductase AhpD, found in Frankia alni (strain DSM 45986 / CECT 9034 / ACN14a).